A 371-amino-acid polypeptide reads, in one-letter code: N-acetyldiaminopimelate deacetylase (371 aa).

The active site involves D68. E127 functions as the Proton acceptor in the catalytic mechanism.

Belongs to the peptidase M20A family. N-acetyldiaminopimelate deacetylase subfamily.

The catalysed reaction is N-acetyl-(2S,6S)-2,6-diaminopimelate + H2O = (2S,6S)-2,6-diaminopimelate + acetate. The protein operates within amino-acid biosynthesis; L-lysine biosynthesis via DAP pathway; LL-2,6-diaminopimelate from (S)-tetrahydrodipicolinate (acetylase route): step 3/3. Its function is as follows. Catalyzes the conversion of N-acetyl-diaminopimelate to diaminopimelate and acetate. This is N-acetyldiaminopimelate deacetylase from Halalkalibacterium halodurans (strain ATCC BAA-125 / DSM 18197 / FERM 7344 / JCM 9153 / C-125) (Bacillus halodurans).